The sequence spans 45 residues: Defensin Tk-AMP-D3 (45 aa).

Intrachain disulfides connect cysteine 3–cysteine 45, cysteine 14–cysteine 34, cysteine 20–cysteine 39, and cysteine 24–cysteine 41.

Plant defense peptide. This Triticum kiharae (Wheat) protein is Defensin Tk-AMP-D3.